Here is a 396-residue protein sequence, read N- to C-terminus: Elongation factor Tu (396 aa).

The tr-type G domain maps to lysine 10–valine 206. The interval glycine 19–threonine 26 is G1. Glycine 19–threonine 26 contributes to the GTP binding site. Position 26 (threonine 26) interacts with Mg(2+). Residues glycine 62–asparagine 66 are G2. A G3 region spans residues aspartate 83–glycine 86. GTP is bound by residues aspartate 83–histidine 87 and asparagine 138–aspartate 141. The G4 stretch occupies residues asparagine 138 to aspartate 141. Residues serine 176–leucine 178 are G5.

Belongs to the TRAFAC class translation factor GTPase superfamily. Classic translation factor GTPase family. EF-Tu/EF-1A subfamily. Monomer.

It localises to the cytoplasm. The enzyme catalyses GTP + H2O = GDP + phosphate + H(+). GTP hydrolase that promotes the GTP-dependent binding of aminoacyl-tRNA to the A-site of ribosomes during protein biosynthesis. This chain is Elongation factor Tu, found in Micrococcus luteus (Micrococcus lysodeikticus).